A 401-amino-acid polypeptide reads, in one-letter code: Secreted LysM effector Blys8 (401 aa).

The first 19 residues, 1-19 (MRTLAIFFIGAAVAAHVSP), serve as a signal peptide directing secretion. The region spanning 42 to 89 (TYYDEAYDKSYTCDDLLSAWVISKQDFESWNPAVGSDCKLVLGHSYCV) is the LysM 1 domain. A compositionally biased stretch (low complexity) spans 98 to 136 (STTTTTTTSTTTKTTTKTTTTTTAAPKPTSSAPSGPSPT). The interval 98–137 (STTTTTTTSTTTKTTTKTTTTTTAAPKPTSSAPSGPSPTQ) is disordered. Residues 146-193 (AYYFVKAGDTCDKISQMYGTFSTAQFIEWNPAVGSSCTGLWAGYYYCV) form the LysM 2 domain. A disordered region spans residues 201–223 (SRTSTAGPTSTKPANGVTTPQPT). The 47-residue stretch at 233 to 279 (QFVYVQPGDQCGTVASRAGVSLSDFLQWNPSTGKDCSGLWANAYACV) folds into the LysM 3 domain.

Belongs to the secreted LysM effector family.

Functionally, might have a role in sequestration of chitin oligosaccharides (breakdown products of fungal cell walls that are released during invasion and act as triggers of host immunity) to dampen host defense. This Beauveria bassiana (strain ARSEF 2860) (White muscardine disease fungus) protein is Secreted LysM effector Blys8.